The following is a 200-amino-acid chain: Peptidyl-tRNA hydrolase (200 aa).

Y23 is a binding site for tRNA. H28 acts as the Proton acceptor in catalysis. Positions 79, 81, and 127 each coordinate tRNA.

This sequence belongs to the PTH family. As to quaternary structure, monomer.

Its subcellular location is the cytoplasm. The catalysed reaction is an N-acyl-L-alpha-aminoacyl-tRNA + H2O = an N-acyl-L-amino acid + a tRNA + H(+). In terms of biological role, hydrolyzes ribosome-free peptidyl-tRNAs (with 1 or more amino acids incorporated), which drop off the ribosome during protein synthesis, or as a result of ribosome stalling. Catalyzes the release of premature peptidyl moieties from peptidyl-tRNA molecules trapped in stalled 50S ribosomal subunits, and thus maintains levels of free tRNAs and 50S ribosomes. The chain is Peptidyl-tRNA hydrolase from Streptomyces coelicolor (strain ATCC BAA-471 / A3(2) / M145).